Consider the following 1479-residue polypeptide: C-type mannose receptor 2 (1479 aa).

The N-terminal stretch at 1 to 30 (MVPIRPALAPWPRHLLRCVLLLGGLRLGHP) is a signal peptide. At 31 to 1413 (ADSAAALLEP…SAALPESPVA (1383 aa)) the chain is on the extracellular side. Residues 37-190 (LLEPDVFLIF…SHGKPCTIPF (154 aa)) form the Ricin B-type lectin domain. The cysteines at positions 92 and 111 are disulfide-linked. Asn-101 and Asn-139 each carry an N-linked (GlcNAc...) asparagine glycan. Positions 181 to 229 (SHGKPCTIPFKYDNQWFHGCTSTGREDGHLWCATTQDYGKDERWGFCPI) constitute a Fibronectin type-II domain. Cystine bridges form between Cys-186–Cys-212, Cys-200–Cys-227, Cys-265–Cys-358, and Cys-334–Cys-350. In terms of domain architecture, C-type lectin 1 spans 243–359 (LTDSCYQFNF…CSIALPYVCK (117 aa)). Residue Asn-363 is glycosylated (N-linked (GlcNAc...) asparagine). C-type lectin domains lie at 388 to 504 (FQGH…SICK), 527 to 643 (HSPS…RYIC), 677 to 808 (KLRH…WICK), 831 to 950 (FQEA…YICK), 978 to 1106 (FLNK…GFIC), 1131 to 1242 (YLNH…GAVC), and 1271 to 1391 (FREH…GVVC). 7 cysteine pairs are disulfide-bonded: Cys-409–Cys-503, Cys-480–Cys-495, Cys-617–Cys-634, Cys-703–Cys-807, Cys-784–Cys-799, Cys-852–Cys-949, and Cys-926–Cys-941. N-linked (GlcNAc...) asparagine glycosylation is present at Asn-1028. The cysteines at positions 1077 and 1097 are disulfide-linked. Lys-1141 is covalently cross-linked (Glycyl lysine isopeptide (Lys-Gly) (interchain with G-Cter in SUMO1)). Cys-1219 and Cys-1233 are disulfide-bonded. The N-linked (GlcNAc...) asparagine glycan is linked to Asn-1348. Cys-1367 and Cys-1382 are joined by a disulfide. The helical transmembrane segment at 1414–1434 (LVVVLTAVLLLLALMTAALIL) threads the bilayer. At 1435–1479 (YRRRQSAERGSFEGARYSRSSHSGPAEATEKNILVSDMEMNEQQE) the chain is on the cytoplasmic side. The segment at 1446-1479 (FEGARYSRSSHSGPAEATEKNILVSDMEMNEQQE) is disordered.

As to quaternary structure, interacts directly with PLAUR/UPAR and PLAU/pro-UPA to form a tri-molecular complex. Interacts with collagen V and with C-terminal region of type I collagen/COL1A1. Phosphorylated. As to expression, highly expressed in heart, lung and kidney, but little or no expression in brain, thymus or adult liver. Expressed at highly endothelialized sites such as those in choroid plexus and kidney glomerulai as well as in chondrocytes in cartilaginous regions of the embryo.

The protein localises to the membrane. Its function is as follows. May play a role as endocytotic lectin receptor displaying calcium-dependent lectin activity. Internalizes glycosylated ligands from the extracellular space for release in an endosomal compartment via clathrin-mediated endocytosis. May be involved in plasminogen activation system controlling the extracellular level of PLAUR/PLAU, and thus may regulate protease activity at the cell surface. May contribute to cellular uptake, remodeling and degradation of extracellular collagen matrices. May participate in remodeling of extracellular matrix cooperating with the matrix metalloproteinases (MMPs). The chain is C-type mannose receptor 2 (Mrc2) from Mus musculus (Mouse).